The chain runs to 286 residues: Transcription factor MafA (286 aa).

Residues S14 and S49 each carry the phosphoserine modification. A compositionally biased stretch (low complexity) spans 51-85 (SSTPLSTPCSSVPSSPSFCAPSPGGQPSAGPTAAP). Residues 51 to 87 (SSTPLSTPCSSVPSSPSFCAPSPGGQPSAGPTAAPLG) are disordered. T53 and T57 each carry phosphothreonine. 2 positions are modified to phosphoserine: S61 and S65. The residue at position 113 (T113) is a Phosphothreonine. Positions 126–167 (HHHHHHHQSYESFRPQPFGGEELPPAAHHHNAHHHHHHHHLR) are disordered. Basic residues predominate over residues 152–166 (AHHHNAHHHHHHHHL). Residues 199–224 (RLKQNRRTLKNRGYAQSCRYKRVQQR) form a basic motif region. Positions 199 to 262 (RLKQNRRTLK…DLYKEKYEKL (64 aa)) constitute a bZIP domain. Positions 227 to 248 (LENEKCQLQSQVEQLKQEVSRL) are leucine-zipper. The segment at 265-286 (RGFPREPSPPAAPKTTAADFFM) is disordered. Position 272 is a phosphoserine (S272). Residues 277–286 (PKTTAADFFM) show a composition bias toward low complexity.

It belongs to the bZIP family. Maf subfamily. In terms of assembly, forms homodimers or heterodimers. May interact (via leucine-zipper domain) with MAFB. May interact with FOS and JUN. Interacts with PCAF; this interaction impairs MAFA ubiquitination.

The protein resides in the nucleus. Its function is as follows. Transcription factor involved in transcription regulation during lens development, including that of crystallin and filensin/BFSP1 genes. Binds to CRE-type MARE 5'-TGCTGACGTCAGCA-3' and TRE-type MARE 5'-TGCTGACTCAGCA-3' DNA sequences. This chain is Transcription factor MafA (MAFA), found in Gallus gallus (Chicken).